The following is a 217-amino-acid chain: Thymidylate kinase (217 aa).

An ATP-binding site is contributed by 11–18 (GLEGAGKS).

The protein belongs to the thymidylate kinase family.

It catalyses the reaction dTMP + ATP = dTDP + ADP. Phosphorylation of dTMP to form dTDP in both de novo and salvage pathways of dTTP synthesis. The sequence is that of Thymidylate kinase from Alkalilimnicola ehrlichii (strain ATCC BAA-1101 / DSM 17681 / MLHE-1).